We begin with the raw amino-acid sequence, 401 residues long: Ribosomal RNA large subunit methyltransferase G (401 aa).

This sequence belongs to the methyltransferase superfamily. RlmG family.

Its subcellular location is the cytoplasm. The enzyme catalyses guanosine(1835) in 23S rRNA + S-adenosyl-L-methionine = N(2)-methylguanosine(1835) in 23S rRNA + S-adenosyl-L-homocysteine + H(+). Its function is as follows. Specifically methylates the guanine in position 1835 (m2G1835) of 23S rRNA. The polypeptide is Ribosomal RNA large subunit methyltransferase G (Shewanella loihica (strain ATCC BAA-1088 / PV-4)).